The sequence spans 475 residues: MVRVRLAPSPTGTLHIGTARTAVFNWLYARRHGGEFVLRIEDTDKERSKSEYTSNILDGLKWLGIDWDAEPVIQSERVEQHRQAIQQLLDAGLAYRCYASEEELNAMREAQMANKKAPRYDNRHRNLSHEQEADYQAEGRQATVRFRIDDSRNIQWNDLVRGAMSWSGADLGGDMVIARRAPADQIGDPLYNLVVVVDDAAMAITHVIRGEDHIANTAKQLLLYEALGLPLPEFAHTPLILNQEGRKLSKRDGVTSVSDFRGMGYTASALANYMTLLGWSPPEGMGERFSLAEAAKVFDFQRVNKAGARFDWDKLNWLNGQVLHELGAAELNRKLTPLWQEAGFETSGRSQAWLEQLCELLGPSLTLLADGVEQARPFFETPSLKEDAQQQLQQPGAKEALKALLSSLSDEPLQAEQAKALISDACKAADVKKGVLMKSLRGALMGQLQGPDLMESWLLLNAAGQDRGRISSALG.

The short motif at 8-18 is the 'HIGH' region element; the sequence is PSPTGTLHIGT. A 'KMSKS' region motif is present at residues 247–251; the sequence is KLSKR. K250 lines the ATP pocket.

It belongs to the class-I aminoacyl-tRNA synthetase family. Glutamate--tRNA ligase type 1 subfamily. Monomer.

The protein resides in the cytoplasm. The enzyme catalyses tRNA(Glu) + L-glutamate + ATP = L-glutamyl-tRNA(Glu) + AMP + diphosphate. Catalyzes the attachment of glutamate to tRNA(Glu) in a two-step reaction: glutamate is first activated by ATP to form Glu-AMP and then transferred to the acceptor end of tRNA(Glu). This chain is Glutamate--tRNA ligase, found in Synechococcus sp. (strain RCC307).